Consider the following 319-residue polypeptide: Acetaldehyde dehydrogenase 1 (319 aa).

Residue cysteine 129 is the Acyl-thioester intermediate of the active site. NAD(+)-binding positions include 160–168 (SAGPGTRAN) and asparagine 287.

The protein belongs to the acetaldehyde dehydrogenase family.

It catalyses the reaction acetaldehyde + NAD(+) + CoA = acetyl-CoA + NADH + H(+). This Burkholderia lata (strain ATCC 17760 / DSM 23089 / LMG 22485 / NCIMB 9086 / R18194 / 383) protein is Acetaldehyde dehydrogenase 1.